A 374-amino-acid polypeptide reads, in one-letter code: MAIRKKSNKNPPLLSHEFLLQNHADIVSCLAMLFLLGLMFEVTAKGAIIFVALQYNVTRPATEEQATESASLYHYGIKDLATVLFYMLVAIIIHAIIQEYVLDKINRRMHFSKTKHSKFNESGQLSAFYLFACVWGTFILISENYISDPTILWRAYPHNLMTFQTKFFYISQLAYWLHAFPELYFQKTKKEDIPRQLVYIGLYLFHIAGAYLLNLNHLGLVLLVLHYFVEFLFHISRLFYFSDEKYQKGFSLWAVLFVLGRLLTLILSVLTVGFGLARAENQKLDFSTGNFNVLAVRIAVLASICITQAFMMWKFINFQLRRWREHSAFQAPPVKRKPAVTKGRSSRKGTENGVNGTVTSNGADSPRNRKEKSS.

The Cytoplasmic portion of the chain corresponds to 1 to 29 (MAIRKKSNKNPPLLSHEFLLQNHADIVSC). The chain crosses the membrane as a helical span at residues 30–50 (LAMLFLLGLMFEVTAKGAIIF). At 51 to 76 (VALQYNVTRPATEEQATESASLYHYG) the chain is on the lumenal side. N-linked (GlcNAc...) asparagine glycosylation is present at asparagine 56. The helical transmembrane segment at 77 to 97 (IKDLATVLFYMLVAIIIHAII) threads the bilayer. Residues 98–121 (QEYVLDKINRRMHFSKTKHSKFNE) lie on the Cytoplasmic side of the membrane. A TLC domain is found at 117–326 (SKFNESGQLS…NFQLRRWREH (210 aa)). A helical transmembrane segment spans residues 122–142 (SGQLSAFYLFACVWGTFILIS). The Lumenal segment spans residues 143–159 (ENYISDPTILWRAYPHN). The helical transmembrane segment at 160–180 (LMTFQTKFFYISQLAYWLHAF) threads the bilayer. Residues 181-192 (PELYFQKTKKED) lie on the Cytoplasmic side of the membrane. The helical transmembrane segment at 193–213 (IPRQLVYIGLYLFHIAGAYLL) threads the bilayer. Residues 214–217 (NLNH) are Lumenal-facing. A helical transmembrane segment spans residues 218 to 238 (LGLVLLVLHYFVEFLFHISRL). The Cytoplasmic segment spans residues 239–251 (FYFSDEKYQKGFS). A helical transmembrane segment spans residues 252 to 272 (LWAVLFVLGRLLTLILSVLTV). Over 273–297 (GFGLARAENQKLDFSTGNFNVLAVR) the chain is Lumenal. Residues 298–318 (IAVLASICITQAFMMWKFINF) traverse the membrane as a helical segment. The Cytoplasmic portion of the chain corresponds to 319 to 374 (QLRRWREHSAFQAPPVKRKPAVTKGRSSRKGTENGVNGTVTSNGADSPRNRKEKSS). The segment at 333–374 (PVKRKPAVTKGRSSRKGTENGVNGTVTSNGADSPRNRKEKSS) is disordered. A compositionally biased stretch (basic residues) spans 334–347 (VKRKPAVTKGRSSR). Polar residues predominate over residues 352 to 363 (NGVNGTVTSNGA). Residue serine 365 is modified to Phosphoserine.

This sequence belongs to the TRAM family. Interacts with SEC61B. May interact with Derlin-1/DERL1. In terms of processing, N-glycosylated.

It is found in the endoplasmic reticulum membrane. Involved in the translocation of nascent protein chains into or through the endoplasmic reticulum (ER) membrane by facilitating the proper chain positioning at the SEC61 channel. Regulates the exposure of nascent secretory protein chain to the cytosol during translocation into the ER. May affect the phospholipid bilayer in the vicinity of the lateral gate of the SEC61 channel, thereby facilitating ER protein transport. Intimately associates with transmembrane (TM) domain of nascent membrane proteins during the entire integration process into the ER membrane. Associates with the second TM domain of G-protein-coupled receptor opsin/OPSD nascent chain in the ER membrane, which may facilitate its integration into the membrane. Under conditions of ER stress, participates in the disposal of misfolded ER membrane proteins during the unfolded protein response (UPR), an integrated stress response (ISR) pathway, by selectively retrotranslocating misfolded ER-membrane proteins from the ER into the cytosol where they are ubiquitinated and degraded by the proteasome. The polypeptide is Translocating chain-associated membrane protein 1 (Mus musculus (Mouse)).